Reading from the N-terminus, the 176-residue chain is Disulfide bond formation protein B (176 aa).

The Cytoplasmic portion of the chain corresponds to 1–14 (MLRFLNQCSQGRGA). Residues 15-31 (WLLMAFTALALELTALW) form a helical membrane-spanning segment. Topologically, residues 32 to 49 (FQHVMLLKPCVLCIYERC) are periplasmic. A disulfide bridge connects residues Cys41 and Cys44. A helical transmembrane segment spans residues 50–65 (ALFGVLGAALIGAIAP). Topologically, residues 66-71 (KTPLRY) are cytoplasmic. A helical membrane pass occupies residues 72–89 (VAMVIWLYSAFRGVQLTY). The Periplasmic portion of the chain corresponds to 90-144 (EHTMLQLYPSPFATCDFMVRFPEWLPLDKWVPQVFVASGDCAERQWDFLGMEMPQ). Cys104 and Cys130 are oxidised to a cystine. Residues 145-163 (WLLGIFIAYLIVAVLVVIS) form a helical membrane-spanning segment. The Cytoplasmic segment spans residues 164-176 (QPFKAKKRDLFGR).

Belongs to the DsbB family.

It localises to the cell inner membrane. In terms of biological role, required for disulfide bond formation in some periplasmic proteins such as PhoA or OmpA. Acts by oxidizing the DsbA protein. This is Disulfide bond formation protein B from Shigella flexneri.